The chain runs to 316 residues: NAD kinase 1 (316 aa).

Asp67 acts as the Proton acceptor in catalysis. 67 to 68 (DG) is an NAD(+) binding site. The segment at 132–151 (RSAEERADAPTPLQQPDVED) is disordered. Residues 160–161 (ND), Arg190, and Asp192 each bind NAD(+).

It belongs to the NAD kinase family. The cofactor is a divalent metal cation.

The protein resides in the cytoplasm. It carries out the reaction NAD(+) + ATP = ADP + NADP(+) + H(+). Its function is as follows. Involved in the regulation of the intracellular balance of NAD and NADP, and is a key enzyme in the biosynthesis of NADP. Catalyzes specifically the phosphorylation on 2'-hydroxyl of the adenosine moiety of NAD to yield NADP. In Parasynechococcus marenigrum (strain WH8102), this protein is NAD kinase 1.